A 58-amino-acid chain; its full sequence is Probable mRNA interferase HicA 2 (58 aa).

The protein belongs to the HicA mRNA interferase family. Probably forms a complex with the cognate antitoxin HicB 2 which inhibits the mRNA interferase activity.

Functionally, toxic component of a type II toxin-antitoxin (TA) system. A probable translation-independent mRNA interferase. The protein is Probable mRNA interferase HicA 2 (hicA2) of Photorhabdus laumondii subsp. laumondii (strain DSM 15139 / CIP 105565 / TT01) (Photorhabdus luminescens subsp. laumondii).